The sequence spans 239 residues: Gag polyprotein (239 aa).

The span at 124 to 141 shows a compositional bias: basic and acidic residues; the sequence is KGEEVGETTAQRDAKMAP. The interval 124–144 is disordered; sequence KGEEVGETTAQRDAKMAPEKM. Positions 172 to 175 match the PPXY motif motif; sequence PPPY. The segment at 184–214 is disordered; the sequence is LAGVGEQQGQGGDTPWGAEQPRAEPGHAGLA.

It is found in the virion. This is Gag polyprotein (ev-1) from Galliformes.